A 274-amino-acid chain; its full sequence is Membrane protein insertase YidC 2 (274 aa).

The signal sequence occupies residues 1 to 20 (MKKKLKLTSLLGLSLLIMTA). C21 carries the N-palmitoyl cysteine lipid modification. C21 carries S-diacylglycerol cysteine lipidation. The next 4 membrane-spanning stretches (helical) occupy residues 56 to 76 (ISIG…LLPV), 128 to 148 (SDSL…FQAL), 167 to 187 (VDTT…STWL), and 205 to 225 (GIPV…ALYW).

The protein belongs to the OXA1/ALB3/YidC family. Type 2 subfamily.

It is found in the cell membrane. Required for the insertion and/or proper folding and/or complex formation of integral membrane proteins into the membrane. Involved in integration of membrane proteins that insert both dependently and independently of the Sec translocase complex, as well as at least some lipoproteins. In Streptococcus pneumoniae serotype 4 (strain ATCC BAA-334 / TIGR4), this protein is Membrane protein insertase YidC 2.